Reading from the N-terminus, the 230-residue chain is Small ribosomal subunit protein uS3 (230 aa).

Residues 39-107 (VRKFLVEKLQ…PAQINIAEIR (69 aa)) enclose the KH type-2 domain.

It belongs to the universal ribosomal protein uS3 family. In terms of assembly, part of the 30S ribosomal subunit. Forms a tight complex with proteins S10 and S14.

Its function is as follows. Binds the lower part of the 30S subunit head. Binds mRNA in the 70S ribosome, positioning it for translation. This Shewanella putrefaciens (strain CN-32 / ATCC BAA-453) protein is Small ribosomal subunit protein uS3.